Reading from the N-terminus, the 802-residue chain is Chondroitin sulfate synthase 1 (802 aa).

At 1 to 7 the chain is on the cytoplasmic side; sequence MAARGRR. The helical; Signal-anchor for type II membrane protein transmembrane segment at 8–28 threads the bilayer; it reads AWLSVLLGLVLGFVLASRLVL. Topologically, residues 29-802 are lumenal; sequence PRASELKRAG…SNNNGSVRTA (774 aa). The disordered stretch occupies residues 34 to 82; sequence LKRAGPRRRASPEGCRSGQAAASQAGGARGDARGAQLWPPGSDPDGGPR. 2 stretches are compositionally biased toward low complexity: residues 49–59 and 66–78; these read RSGQAAASQAG and RGAQ…SDPD. N-linked (GlcNAc...) asparagine glycosylation is found at Asn-189 and Asn-623. Positions 633 and 747 each coordinate a divalent metal cation. The N-linked (GlcNAc...) asparagine glycan is linked to Asn-796.

It belongs to the chondroitin N-acetylgalactosaminyltransferase family. The cofactor is Co(2+). Mn(2+) serves as cofactor. Requires Cd(2+) as cofactor. In terms of tissue distribution, ubiquitous, with the highest levels in placenta. Detected at low levels in brain, heart, skeletal muscle, colon, thymus, spleen, kidney, liver, adrenal gland, mammary gland, stomach, small intestine, lung and peripheral blood leukocytes.

The protein localises to the golgi apparatus. It is found in the golgi stack membrane. The protein resides in the secreted. It catalyses the reaction 3-O-(beta-D-GlcA-(1-&gt;3)-beta-D-GalNAc-(1-&gt;4)-beta-D-GlcA-(1-&gt;3)-beta-D-Gal-(1-&gt;3)-beta-D-Gal-(1-&gt;4)-beta-D-Xyl)-L-seryl-[protein] + UDP-N-acetyl-alpha-D-galactosamine = 3-O-(beta-D-GalNAc-(1-&gt;4)-beta-D-GlcA-(1-&gt;3)-beta-D-GalNAc-(1-&gt;4)-beta-D-GlcA-(1-&gt;3)-beta-D-Gal-(1-&gt;3)-beta-D-Gal-(1-&gt;4)-beta-D-Xyl)-L-seryl-[protein] + UDP + H(+). The enzyme catalyses 3-O-{beta-D-GlcA-(1-&gt;3)-[beta-D-GalNAc-(1-&gt;4)-beta-D-GlcA-(1-&gt;3)](n)-beta-D-GalNAc-(1-&gt;4)-beta-D-GlcA-(1-&gt;3)-beta-D-Gal-(1-&gt;3)-beta-D-Gal-(1-&gt;4)-beta-D-Xyl}-L-seryl-[protein] + UDP-N-acetyl-alpha-D-galactosamine = 3-O-{[beta-D-GalNAc-(1-&gt;4)-beta-D-GlcA-(1-&gt;3)](n+1)-beta-D-GalNAc-(1-&gt;4)-beta-D-GlcA-(1-&gt;3)-beta-D-Gal-(1-&gt;3)-beta-D-Gal-(1-&gt;4)-beta-D-Xyl}-L-seryl-[protein] + UDP + H(+). It carries out the reaction 3-O-(beta-D-GalNAc-(1-&gt;4)-beta-D-GlcA-(1-&gt;3)-beta-D-Gal-(1-&gt;3)-beta-D-Gal-(1-&gt;4)-beta-D-Xyl)-L-seryl-[protein] + UDP-alpha-D-glucuronate = 3-O-(beta-D-GlcA-(1-&gt;3)-beta-D-GalNAc-(1-&gt;4)-beta-D-GlcA-(1-&gt;3)-beta-D-Gal-(1-&gt;3)-beta-D-Gal-(1-&gt;4)-beta-D-Xyl)-L-seryl-[protein] + UDP + H(+). The catalysed reaction is 3-O-{[beta-D-GalNAc-(1-&gt;4)-beta-D-GlcA-(1-&gt;3)](n)-beta-D-GalNAc-(1-&gt;4)-beta-D-GlcA-(1-&gt;3)-beta-D-Gal-(1-&gt;3)-beta-D-Gal-(1-&gt;4)-beta-D-Xyl}-L-seryl-[protein] + UDP-alpha-D-glucuronate = 3-O-{beta-D-GlcA-(1-&gt;3)-[beta-D-GalNAc-(1-&gt;4)-beta-D-GlcA-(1-&gt;3)](n)-beta-D-GalNAc-(1-&gt;4)-beta-D-GlcA-(1-&gt;3)-beta-D-Gal-(1-&gt;3)-beta-D-Gal-(1-&gt;4)-beta-D-Xyl}-L-seryl-[protein] + UDP + H(+). Functionally, has both beta-1,3-glucuronic acid and beta-1,4-N-acetylgalactosamine transferase activity. Transfers glucuronic acid (GlcUA) from UDP-GlcUA and N-acetylgalactosamine (GalNAc) from UDP-GalNAc to the non-reducing end of the elongating chondroitin polymer. Involved in the negative control of osteogenesis likely through the modulation of NOTCH signaling. The protein is Chondroitin sulfate synthase 1 of Homo sapiens (Human).